The primary structure comprises 160 residues: Cytochrome b6-f complex subunit 4 (160 aa).

A run of 3 helical transmembrane segments spans residues 36–56 (LLYVFPIVIMGSFAAIVALAV), 95–115 (LLGVLAMGSVPVGLILVPFIE), and 131–151 (TVFLVGTLVTVWLGIGAALPL).

Belongs to the cytochrome b family. PetD subfamily. As to quaternary structure, the 4 large subunits of the cytochrome b6-f complex are cytochrome b6, subunit IV (17 kDa polypeptide, PetD), cytochrome f and the Rieske protein, while the 4 small subunits are PetG, PetL, PetM and PetN. The complex functions as a dimer.

It is found in the cellular thylakoid membrane. In terms of biological role, component of the cytochrome b6-f complex, which mediates electron transfer between photosystem II (PSII) and photosystem I (PSI), cyclic electron flow around PSI, and state transitions. The sequence is that of Cytochrome b6-f complex subunit 4 from Nostoc punctiforme (strain ATCC 29133 / PCC 73102).